Here is a 255-residue protein sequence, read N- to C-terminus: NAD-dependent protein deacylase (255 aa).

A Deacetylase sirtuin-type domain is found at 1–253; the sequence is MIEEAPRIIA…VKVKRCLENK (253 aa). An NAD(+)-binding site is contributed by 20–39; sequence GAGVSAESGIPTFRDRGGLW. 2 residues coordinate substrate: Y64 and R67. 98 to 101 serves as a coordination point for NAD(+); it reads QNID. H116 acts as the Proton acceptor in catalysis. Zn(2+)-binding residues include C124, C127, C151, and C154. Residues 191-193, 217-219, and A235 each bind NAD(+); these read GTS and NTK.

The protein belongs to the sirtuin family. Class III subfamily. Requires Zn(2+) as cofactor.

Its subcellular location is the cytoplasm. It catalyses the reaction N(6)-acetyl-L-lysyl-[protein] + NAD(+) + H2O = 2''-O-acetyl-ADP-D-ribose + nicotinamide + L-lysyl-[protein]. The enzyme catalyses N(6)-succinyl-L-lysyl-[protein] + NAD(+) + H2O = 2''-O-succinyl-ADP-D-ribose + nicotinamide + L-lysyl-[protein]. Functionally, NAD-dependent lysine deacetylase and desuccinylase that specifically removes acetyl and succinyl groups on target proteins. Modulates the activities of several proteins which are inactive in their acylated form. Deacetylates the N-terminal lysine residue of Alba, the major archaeal chromatin protein and that, in turn, increases Alba's DNA binding affinity, thereby repressing transcription. The protein is NAD-dependent protein deacylase of Thermococcus sibiricus (strain DSM 12597 / MM 739).